The following is a 198-amino-acid chain: Recombination protein RecR (198 aa).

Residues 57 to 72 form a C4-type zinc finger; that stretch reads CSLCGNLDTVDPCHIC. The Toprim domain maps to 80–175; that stretch reads GLICVVETVG…TVTRVGHGVP (96 aa).

Belongs to the RecR family.

May play a role in DNA repair. It seems to be involved in an RecBC-independent recombinational process of DNA repair. It may act with RecF and RecO. The sequence is that of Recombination protein RecR from Gluconobacter oxydans (strain 621H) (Gluconobacter suboxydans).